A 391-amino-acid chain; its full sequence is Decapping nuclease RAI1 (391 aa).

Glu-174 lines the a divalent metal cation pocket. Residue Glu-223 coordinates substrate. A divalent metal cation contacts are provided by Asp-225, Glu-244, and Leu-245. 2 residues coordinate substrate: Lys-246 and Gln-270.

Belongs to the DXO/Dom3Z family. Interacts with RAT1; the interaction is direct, stabilizes RAT1 protein structure and stimulates its exoribonuclease activity. The interaction also stimulates RAI1 pyrophosphohydrolase activity, probably by recruiting it to mRNA substrates. A divalent metal cation serves as cofactor.

It localises to the nucleus. The enzyme catalyses a 5'-end NAD(+)-phospho-ribonucleoside in mRNA + H2O = a 5'-end phospho-ribonucleoside in mRNA + NAD(+) + H(+). It catalyses the reaction a 5'-end (N(7)-methyl 5'-triphosphoguanosine)-ribonucleoside-ribonucleotide in mRNA + H2O = a (N(7)-methyl 5'-triphosphoguanosine)-nucleoside + a 5'-end phospho-ribonucleoside in mRNA + H(+). It carries out the reaction a 5'-end triphospho-ribonucleoside in mRNA + H2O = a 5'-end phospho-ribonucleoside in mRNA + diphosphate + H(+). Decapping enzyme for NAD-capped RNAs: specifically hydrolyzes the nicotinamide adenine dinucleotide (NAD) cap from a subset of RNAs by removing the entire NAD moiety from the 5'-end of an NAD-capped RNA. The NAD-cap is present at the 5'-end of some RNAs and snoRNAs. In contrast to the canonical 5'-end N7 methylguanosine (m7G) cap, the NAD cap promotes mRNA decay. Also acts as a non-canonical decapping enzyme that removes the entire cap structure of m7G capped or incompletely capped RNAs. Has decapping activity toward incomplete 5'-end m7G cap mRNAs such as unmethylated 5'-end-capped RNA (cap0), while it has no activity toward 2'-O-ribose methylated m7G cap (cap1). Also possesses RNA 5'-pyrophosphohydrolase activity by hydrolyzing the 5'-end triphosphate to release pyrophosphates. Stimulates exoribonuclease activity of Rat1, allowing it to degrade RNAs with stable secondary structure more effectively. The polypeptide is Decapping nuclease RAI1 (Candida albicans (strain SC5314 / ATCC MYA-2876) (Yeast)).